An 803-amino-acid polypeptide reads, in one-letter code: Leucine--tRNA ligase (803 aa).

The 'HIGH' region motif lies at 40-51; sequence PYPSGAGLHVGH. The short motif at 575–579 is the 'KMSKS' region element; the sequence is KMSKS. Residue Lys-578 participates in ATP binding.

Belongs to the class-I aminoacyl-tRNA synthetase family.

Its subcellular location is the cytoplasm. It catalyses the reaction tRNA(Leu) + L-leucine + ATP = L-leucyl-tRNA(Leu) + AMP + diphosphate. This chain is Leucine--tRNA ligase, found in Listeria monocytogenes serotype 4a (strain HCC23).